The primary structure comprises 237 residues: Sulfolipid-1 exporter Sap (237 aa).

The next 6 membrane-spanning stretches (helical) occupy residues V5–M25, F38–G58, F66–L86, V141–L161, A171–S191, and D217–L237.

It belongs to the peptidoglycolipid addressing protein (GAP) (TC 2.A.116) family.

The protein resides in the cell inner membrane. Its function is as follows. Required for the transport across the inner membrane of sulfolipid-1 (SL-1), which is a major cell wall lipid of pathogenic mycobacteria. Could also transport SL1278 (2-palmitoyl-3-(C43)-phthioceranyl-alpha, alpha'-D-trehalose-2'-sulfate), which is the precursor of SL-1. May potentiate SL-1 levels and confer specificity for sulfolipids over structurally similar glycolipids. This Mycobacterium tuberculosis (strain ATCC 25618 / H37Rv) protein is Sulfolipid-1 exporter Sap.